A 135-amino-acid polypeptide reads, in one-letter code: Holo-[acyl-carrier-protein] synthase (135 aa).

2 residues coordinate Mg(2+): Asp8 and Glu57.

Belongs to the P-Pant transferase superfamily. AcpS family. The cofactor is Mg(2+).

The protein resides in the cytoplasm. It carries out the reaction apo-[ACP] + CoA = holo-[ACP] + adenosine 3',5'-bisphosphate + H(+). Its function is as follows. Transfers the 4'-phosphopantetheine moiety from coenzyme A to a Ser of acyl-carrier-protein. This chain is Holo-[acyl-carrier-protein] synthase, found in Xanthobacter autotrophicus (strain ATCC BAA-1158 / Py2).